Here is a 334-residue protein sequence, read N- to C-terminus: RNA 3'-terminal phosphate cyclase (334 aa).

279–282 contacts ATP; that stretch reads HMGD. His303 functions as the Tele-AMP-histidine intermediate in the catalytic mechanism.

This sequence belongs to the RNA 3'-terminal cyclase family. Type 1 subfamily.

It is found in the cytoplasm. The catalysed reaction is a 3'-end 3'-phospho-ribonucleotide-RNA + ATP = a 3'-end 2',3'-cyclophospho-ribonucleotide-RNA + AMP + diphosphate. In terms of biological role, catalyzes the conversion of 3'-phosphate to a 2',3'-cyclic phosphodiester at the end of RNA. The mechanism of action of the enzyme occurs in 3 steps: (A) adenylation of the enzyme by ATP; (B) transfer of adenylate to an RNA-N3'P to produce RNA-N3'PP5'A; (C) and attack of the adjacent 2'-hydroxyl on the 3'-phosphorus in the diester linkage to produce the cyclic end product. The biological role of this enzyme is unknown but it is likely to function in some aspects of cellular RNA processing. This chain is RNA 3'-terminal phosphate cyclase, found in Metallosphaera sedula (strain ATCC 51363 / DSM 5348 / JCM 9185 / NBRC 15509 / TH2).